The following is a 432-amino-acid chain: Cyclic 2,3-diphosphoglycerate synthetase (432 aa).

This sequence belongs to the cyclic 2,3-diphosphoglycerate synthetase family.

The protein resides in the cytoplasm. It carries out the reaction (2R)-2,3-bisphosphoglycerate + ATP + H(+) = cyclic (2R)-2,3-bisphosphoglycerate + ADP + phosphate. Its function is as follows. Catalyzes the formation of cyclic 2,3-diphosphoglycerate (cDPG) by formation of an intramolecular phosphoanhydride bond at the expense of ATP. The polypeptide is Cyclic 2,3-diphosphoglycerate synthetase (Thermococcus onnurineus (strain NA1)).